Here is a 239-residue protein sequence, read N- to C-terminus: Uridylate kinase (239 aa).

13-16 (KVSG) is a binding site for ATP. Position 55 (Gly55) interacts with UMP. ATP is bound by residues Gly56 and Arg60. UMP is bound by residues Asp75 and 136 to 143 (TGNPFCTT). 4 residues coordinate ATP: Thr163, Gln164, Tyr169, and Asp172.

The protein belongs to the UMP kinase family. Homohexamer.

It localises to the cytoplasm. It carries out the reaction UMP + ATP = UDP + ADP. It functions in the pathway pyrimidine metabolism; CTP biosynthesis via de novo pathway; UDP from UMP (UMPK route): step 1/1. Inhibited by UTP. Catalyzes the reversible phosphorylation of UMP to UDP. This is Uridylate kinase from Rickettsia bellii (strain RML369-C).